Here is a 107-residue protein sequence, read N- to C-terminus: MDKREIFDALDDFSQNLMLTLAEVEAIKKNLKSVIEENTVLRLENDKLRERLGEVEKTGPSKGGGQGRENLERIYLDGFHICTDFYGQRRDNDEEECAFCNELLFRE.

4 residues coordinate Zn(2+): histidine 80, cysteine 82, cysteine 97, and cysteine 100.

It belongs to the YabA family. As to quaternary structure, homotetramer. Interacts with both DnaA and DnaN, acting as a bridge between these two proteins. It depends on Zn(2+) as a cofactor.

Its subcellular location is the cytoplasm. The protein resides in the nucleoid. Involved in control of chromosome replication initiation. Inhibits the cooperative binding of DnaA to the oriC region, thus negatively regulating initiation of chromosome replication. Inhibits the ability of DnaA-ATP to form a helix on DNA; does not disassemble preformed DnaA-DNA helices. Decreases the residence time of DnaA on the chromosome at its binding sites (oriC, replication forks and promoter-binding sites). Tethers DnaA to the replication machinery via the DNA polymerase beta sliding clamp subunit (dnaN). Associates with oriC and other DnaA targets on the chromosome in a DnaA-dependent manner. In Streptococcus gordonii (strain Challis / ATCC 35105 / BCRC 15272 / CH1 / DL1 / V288), this protein is Replication initiation control protein YabA.